A 295-amino-acid chain; its full sequence is Sulfotransferase 1A1 (295 aa).

48–53 provides a ligand contact to 3'-phosphoadenylyl sulfate; the sequence is KSGTTW. Residue 106 to 108 coordinates substrate; the sequence is KTH. His108 acts as the Proton acceptor in catalysis. 3'-phosphoadenylyl sulfate contacts are provided by residues Arg130, Ser138, Tyr193, 227 to 232, and 255 to 259; these read TSFKEM and FMRKG. Ser138 carries the post-translational modification Phosphoserine.

This sequence belongs to the sulfotransferase 1 family. As to quaternary structure, homodimer.

The protein resides in the cytoplasm. The catalysed reaction is a phenol + 3'-phosphoadenylyl sulfate = an aryl sulfate + adenosine 3',5'-bisphosphate + H(+). It carries out the reaction 17beta-estradiol + 3'-phosphoadenylyl sulfate = 17beta-estradiol 3-sulfate + adenosine 3',5'-bisphosphate + H(+). It catalyses the reaction 4-ethylphenol + 3'-phosphoadenylyl sulfate = 4-ethylphenyl sulfate + adenosine 3',5'-bisphosphate + H(+). The enzyme catalyses 4-nitrophenol + 3'-phosphoadenylyl sulfate = 4-nitrophenyl sulfate + adenosine 3',5'-bisphosphate. The catalysed reaction is dopamine + 3'-phosphoadenylyl sulfate = dopamine 3-O-sulfate + adenosine 3',5'-bisphosphate + H(+). It carries out the reaction dopamine + 3'-phosphoadenylyl sulfate = dopamine 4-O-sulfate + adenosine 3',5'-bisphosphate + H(+). It catalyses the reaction 3,3',5-triiodo-L-thyronine + 3'-phosphoadenylyl sulfate = 3,3',5-triiodo-L-thyronine sulfate + adenosine 3',5'-bisphosphate + H(+). The enzyme catalyses 3,3',5'-triiodo-L-thyronine + 3'-phosphoadenylyl sulfate = 3,3',5'-triiodo-L-thyronine sulfate + adenosine 3',5'-bisphosphate + H(+). The catalysed reaction is 3,3'-diiodo-L-thyronine + 3'-phosphoadenylyl sulfate = 3,3'-diiodo-L-thyronine sulfate + adenosine 3',5'-bisphosphate + H(+). It carries out the reaction L-thyroxine + 3'-phosphoadenylyl sulfate = L-thyroxine sulfate + adenosine 3',5'-bisphosphate + H(+). Functionally, sulfotransferase that utilizes 3'-phospho-5'-adenylyl sulfate (PAPS) as sulfonate donor to catalyze the sulfate conjugation of a wide variety of acceptor molecules bearing a hydroxyl or an amine group. Sulfonation increases the water solubility of most compounds, and therefore their renal excretion, but it can also result in bioactivation to form active metabolites. Displays broad substrate specificity for small phenolic compounds. Plays an important role in the sulfonation of endogenous molecules such as steroid hormones. Mediates also the metabolic activation of carcinogenic N-hydroxyarylamines leading to highly reactive intermediates capable of forming DNA adducts, potentially resulting in mutagenesis. May play a role in gut microbiota-host metabolic interaction. O-sulfonates 4-ethylphenol (4-EP), a dietary tyrosine-derived metabolite produced by gut bacteria. The product 4-EPS crosses the blood-brain barrier and may negatively regulate oligodendrocyte maturation and myelination, affecting the functional connectivity of different brain regions associated with the limbic system. Catalyzes the sulfate conjugation of dopamine. Catalyzes the sulfation of T4 (L-thyroxine/3,5,3',5'-tetraiodothyronine), T3 (3,5,3'-triiodothyronine), rT3 (3,3',5'-triiodothyronine) and 3,3'-T2 (3,3'-diiodothyronine), with a substrate preference of 3,3'-T2 &gt; rT3 &gt; T3 &gt; T4. The chain is Sulfotransferase 1A1 (SULT1A1) from Macaca fascicularis (Crab-eating macaque).